A 228-amino-acid chain; its full sequence is Methylthioribulose-1-phosphate dehydratase (228 aa).

Substrate is bound at residue Cys92. His110 and His112 together coordinate Zn(2+). Glu135 functions as the Proton donor/acceptor in the catalytic mechanism. His192 contributes to the Zn(2+) binding site.

The protein belongs to the aldolase class II family. MtnB subfamily. Zn(2+) serves as cofactor.

The protein resides in the cytoplasm. The protein localises to the nucleus. It carries out the reaction 5-(methylsulfanyl)-D-ribulose 1-phosphate = 5-methylsulfanyl-2,3-dioxopentyl phosphate + H2O. It functions in the pathway amino-acid biosynthesis; L-methionine biosynthesis via salvage pathway; L-methionine from S-methyl-5-thio-alpha-D-ribose 1-phosphate: step 2/6. Its function is as follows. Catalyzes the dehydration of methylthioribulose-1-phosphate (MTRu-1-P) into 2,3-diketo-5-methylthiopentyl-1-phosphate (DK-MTP-1-P). The sequence is that of Methylthioribulose-1-phosphate dehydratase from Schizosaccharomyces pombe (strain 972 / ATCC 24843) (Fission yeast).